The primary structure comprises 334 residues: Nucleoid-associated protein YejK (334 aa).

The protein belongs to the YejK family.

The protein localises to the cytoplasm. The protein resides in the nucleoid. In Escherichia fergusonii (strain ATCC 35469 / DSM 13698 / CCUG 18766 / IAM 14443 / JCM 21226 / LMG 7866 / NBRC 102419 / NCTC 12128 / CDC 0568-73), this protein is Nucleoid-associated protein YejK.